Consider the following 77-residue polypeptide: Large ribosomal subunit protein eL14 (77 aa).

It belongs to the eukaryotic ribosomal protein eL14 family.

In Methanococcus maripaludis (strain C5 / ATCC BAA-1333), this protein is Large ribosomal subunit protein eL14.